A 497-amino-acid polypeptide reads, in one-letter code: Endoglucanase 17 (497 aa).

The signal sequence occupies residues 1-21 (MAAAGGAVLLLVLATATSVTG). The Nucleophile role is filled by Asp-77. His-406 is a catalytic residue. N-linked (GlcNAc...) asparagine glycosylation occurs at Asn-451. Catalysis depends on residues Asp-458 and Glu-467.

It belongs to the glycosyl hydrolase 9 (cellulase E) family.

The protein resides in the secreted. It catalyses the reaction Endohydrolysis of (1-&gt;4)-beta-D-glucosidic linkages in cellulose, lichenin and cereal beta-D-glucans.. In Oryza sativa subsp. japonica (Rice), this protein is Endoglucanase 17 (GLU13).